We begin with the raw amino-acid sequence, 490 residues long: MDFLIIVSTLLLSYILIWVLGVGKPKNLPPGPTRLPIIGNLHLLGALPHQSLAKLAKIHGPIMSLQLGQITTLVISSATAAEEVLKKQDLAFSTRNVPDAVRAYNHERHSISFLHVCTEWRTLRRIVSSNIFSNSSLEAKQHLRSKKVEELIAYCRKAALSNENVHIGRAAFRTSLNLLSNTIFSKDLTDPYEDSGKEFREVITNIMVDSAKTNLVDVFPVLKKIDPQGIKRGMARHFSKVLGIFDQLIEERMRTGRFEQGDVLDVCLKMMQDNPNEFNHTNIKALFLDLFVAGTDTTSITIEWAMTELLRKPHIMSKAKEELEKVIGKGSIVKEDDVLRLPYLSCIVKEVLRLHPPSPLLLPRKVVTQVELSGYTIPAGTLVFVNAWAIGRDPTVWDDSLEFKPQRFLESRLDVRGHDFDLIPFGAGRRICPGIPLATRMVPIMLGSLLNNFDWKIDTKVPYDVLDMTEKNGTTISKAKPLCVVPIPLN.

Position 432 (cysteine 432) interacts with heme.

The protein belongs to the cytochrome P450 family. The cofactor is heme.

Capable of dealkylating a model xenobiotic compound, 7-ethoxycoumarin. Metabolizes with high efficiency a wide range of xenobiotics, including alkoxycoumarins, alkoxyresorufins, and several herbicides of the class of phenylureas. Catalyzes the double N-dealkylation (oxidative N-demethylation) of phenylureas such as chlortoluron and isoproturon with turnover rates comparable to those reported for physiological substrates and produces non-phytotoxic compounds. Could be used for control of herbicide tolerance and selectivity, as well as soil and groundwater bioremediation. The polypeptide is 7-ethoxycoumarin O-deethylase (CYP76B1) (Helianthus tuberosus (Jerusalem artichoke)).